Here is an 856-residue protein sequence, read N- to C-terminus: DNA gyrase subunit A (856 aa).

Residues 45-517 (LPDARDGLKP…DDGTVTHEDL (473 aa)) form the Topo IIA-type catalytic domain. Residue Y133 is the O-(5'-phospho-DNA)-tyrosine intermediate of the active site. The short motif at 544–550 (QHRGGKG) is the GyrA-box element. The interval 822-856 (TVASVDTHPRTDDSSEADSGDGESESENATATTPS) is disordered. The span at 835-847 (SSEADSGDGESES) shows a compositional bias: acidic residues.

It belongs to the type II topoisomerase GyrA/ParC subunit family. As to quaternary structure, heterotetramer, composed of two GyrA and two GyrB chains. In the heterotetramer, GyrA contains the active site tyrosine that forms a transient covalent intermediate with DNA, while GyrB binds cofactors and catalyzes ATP hydrolysis.

It localises to the cytoplasm. The catalysed reaction is ATP-dependent breakage, passage and rejoining of double-stranded DNA.. In terms of biological role, a type II topoisomerase that negatively supercoils closed circular double-stranded (ds) DNA in an ATP-dependent manner to modulate DNA topology and maintain chromosomes in an underwound state. Negative supercoiling favors strand separation, and DNA replication, transcription, recombination and repair, all of which involve strand separation. Also able to catalyze the interconversion of other topological isomers of dsDNA rings, including catenanes and knotted rings. Type II topoisomerases break and join 2 DNA strands simultaneously in an ATP-dependent manner. The chain is DNA gyrase subunit A from Haloquadratum walsbyi (strain DSM 16790 / HBSQ001).